We begin with the raw amino-acid sequence, 376 residues long: Putative glutamate--cysteine ligase 2-1 (376 aa).

Belongs to the glutamate--cysteine ligase type 2 family. YbdK subfamily.

It catalyses the reaction L-cysteine + L-glutamate + ATP = gamma-L-glutamyl-L-cysteine + ADP + phosphate + H(+). Functionally, ATP-dependent carboxylate-amine ligase which exhibits weak glutamate--cysteine ligase activity. In Mycolicibacterium smegmatis (strain ATCC 700084 / mc(2)155) (Mycobacterium smegmatis), this protein is Putative glutamate--cysteine ligase 2-1.